The sequence spans 137 residues: Large ribosomal subunit protein uL16 (137 aa).

This sequence belongs to the universal ribosomal protein uL16 family. As to quaternary structure, part of the 50S ribosomal subunit.

Binds 23S rRNA and is also seen to make contacts with the A and possibly P site tRNAs. This chain is Large ribosomal subunit protein uL16, found in Lactococcus lactis subsp. lactis (strain IL1403) (Streptococcus lactis).